Here is a 962-residue protein sequence, read N- to C-terminus: Atromentin synthetase nps3 (962 aa).

Positions 55-469 are adenylation (A) domain; that stretch reads FISSSAHDSS…SGRIKDTVIV (415 aa). The region spanning 601 to 679 is the Carrier domain; it reads VPATITETAF…DLAKYIDALV (79 aa). Positions 606–676 are thiolation and peptide carrier (T) domain; the sequence is TETAFAKIFA…VLRDLAKYID (71 aa). S638 carries the O-(pantetheine 4'-phosphoryl)serine modification. The tract at residues 702–805 is thioesterase (TE) domain; that stretch reads PIFFVHPGVG…VGLINIPPHI (104 aa).

It belongs to the ATP-dependent AMP-binding enzyme family.

The protein operates within secondary metabolite biosynthesis. In terms of biological role, an L-tyrosine:2-oxoglutarate aminotransferase (probably amt1) and atromentin synthetase nps3 catalyze consecutive steps to turn over L-tyrosine into atromentin, which represents the generic precursor molecule for the entire terphenylquinone and pulvinic acid family of pigments, which are widely distributed secondary metabolites in homobasidiomycetes. The first step catalyzed by the aminotransferase converts L-tyrosine in to 4-hydroxyphenylpyruvate (4-HPP). Adenylation of two 4-HPP monomers by the nps3 adenylation (A) domain, covalent tethering of the monomers as a thioester and oxoester onto the nps3 thiolation (T) and thioesterase (TE) domains, respectively, and symmetric C-C-bond formation between two monomers catalyzed by the nps3 TE domain leads to atromentin. Follow-up products of atromentin in S.lacrymans include atromentic acid, xerocomic acid, isoxerocomic acid and variegatic acid. This Serpula lacrymans var. lacrymans (strain S7.9) (Dry rot fungus) protein is Atromentin synthetase nps3 (nps3).